The primary structure comprises 209 residues: Ribosomal RNA large subunit methyltransferase E (209 aa).

5 residues coordinate S-adenosyl-L-methionine: glycine 60, tryptophan 62, aspartate 80, aspartate 96, and aspartate 121. The active-site Proton acceptor is lysine 161. Residues 182–196 (VQMRKPSSSRDRSRE) are compositionally biased toward basic and acidic residues. The interval 182–209 (VQMRKPSSSRDRSREQYLLGRGFRGRSE) is disordered.

The protein belongs to the class I-like SAM-binding methyltransferase superfamily. RNA methyltransferase RlmE family.

It localises to the cytoplasm. The catalysed reaction is uridine(2552) in 23S rRNA + S-adenosyl-L-methionine = 2'-O-methyluridine(2552) in 23S rRNA + S-adenosyl-L-homocysteine + H(+). Functionally, specifically methylates the uridine in position 2552 of 23S rRNA at the 2'-O position of the ribose in the fully assembled 50S ribosomal subunit. In Pseudomonas fluorescens (strain ATCC BAA-477 / NRRL B-23932 / Pf-5), this protein is Ribosomal RNA large subunit methyltransferase E.